Here is a 111-residue protein sequence, read N- to C-terminus: Antitoxin PrlF (111 aa).

Positions 12–59 constitute a SpoVT-AbrB domain; sequence TTESKVTIRGQTTIPAPVREALKLKPGLDSIHYEILPGGQVFMCRLGD.

As to quaternary structure, homodimer; forms a complex with YhaV with stoichiometry PrlF(2)-YhaV(4), possibly as a YhaV(2)-PrlF(2)-YhaV(2) complex like the MazFE complex.

Its subcellular location is the cytoplasm. Functionally, antitoxin component of a type II toxin-antitoxin (TA) system. Labile antitoxin that binds to the YhaV toxin and neutralizes its ribonuclease activity. Also acts as a transcription factor. The YhaV/PrlF complex binds the prlF-yhaV operon, probably negatively regulating its expression. This chain is Antitoxin PrlF (prlF), found in Escherichia coli O6:H1 (strain CFT073 / ATCC 700928 / UPEC).